The chain runs to 340 residues: 4-amino-5-hydroxymethyl-2-methylpyrimidine phosphate synthase THI11 (340 aa).

Lysine 62 bears the N6-(pyridoxal phosphate)lysine mark. The active site involves histidine 66. Position 115 to 118 (115 to 118) interacts with pyridoxal 5'-phosphate; that stretch reads GEFG. A CCCFC; essential for catalytic activity, may be the site of iron coordination motif is present at residues 195-199; it reads CCCFC.

This sequence belongs to the NMT1/THI5 family. In terms of assembly, homodimer. Fe cation serves as cofactor.

It catalyses the reaction N(6)-(pyridoxal phosphate)-L-lysyl-[4-amino-5-hydroxymethyl-2-methylpyrimidine phosphate synthase] + L-histidyl-[4-amino-5-hydroxymethyl-2-methylpyrimidine phosphate synthase] + 2 Fe(3+) + 4 H2O = L-lysyl-[4-amino-5-hydroxymethyl-2-methylpyrimidine phosphate synthase] + (2S)-2-amino-5-hydroxy-4-oxopentanoyl-[4-amino-5-hydroxymethyl-2-methylpyrimidine phosphate synthase] + 4-amino-2-methyl-5-(phosphooxymethyl)pyrimidine + 3-oxopropanoate + 2 Fe(2+) + 2 H(+). Its pathway is cofactor biosynthesis; thiamine diphosphate biosynthesis. Functionally, responsible for the formation of the pyrimidine heterocycle in the thiamine biosynthesis pathway. Catalyzes the formation of hydroxymethylpyrimidine phosphate (HMP-P) from histidine and pyridoxal phosphate (PLP). The protein uses PLP and the active site histidine to form HMP-P, generating an inactive enzyme. The enzyme can only undergo a single turnover, which suggests it is a suicide enzyme. This chain is 4-amino-5-hydroxymethyl-2-methylpyrimidine phosphate synthase THI11, found in Saccharomyces cerevisiae (strain ATCC 204508 / S288c) (Baker's yeast).